The chain runs to 628 residues: E3 SUMO-protein ligase PIAS3 (628 aa).

Residues 1–200 (MAELGELKHM…QLRFCLCETS (200 aa)) form an interaction with CCAR2 region. Residues 11 to 45 (VMSFRVSELQVLLGFAGRNKSGRKHELLAKALHLL) enclose the SAP domain. Residues 19 to 23 (LQVLL) carry the LXXLL motif motif. Residues Lys46 and Lys56 each participate in a glycyl lysine isopeptide (Lys-Gly) (interchain with G-Cter in SUMO2) cross-link. A disordered region spans residues 72-95 (PSDLSLLSLPPGTSPVGSPSPLAS). The 166-residue stretch at 115-280 (MHPPLPQPVH…SLSVYLVRQL (166 aa)) folds into the PINIT domain. Glycyl lysine isopeptide (Lys-Gly) (interchain with G-Cter in SUMO2) cross-links involve residues Lys230 and Lys307. The SP-RING-type zinc-finger motif lies at 312–393 (PDSEVATTSL…FMEILNSCSD (82 aa)). Zn(2+) contacts are provided by Cys343, His345, Cys366, and Cys369. Residues 450 to 460 (LTIESSSDEED) form an SUMO1-binding region. Glycyl lysine isopeptide (Lys-Gly) (interchain with G-Cter in SUMO2) cross-links involve residues Lys466 and Lys482. The segment at 573–618 (LAPTLGSSHRSATPAPAPGRVSSIVAPGSSLREGHGGPLPSGPSLT) is disordered.

This sequence belongs to the PIAS family. In terms of assembly, binds SUMO1 and UBE2I. Interacts with AR, BCL11A, GFI1, HMGA2, IRF1, MITF, NCOA2, as well as with STAT3, after treatment with IL6, CNTF or OSM and with STAT5, after PRL stimulation. Interacts with PLAG1. Interacts with ZFHX3. Interacts with MTA1. Interacts with CCAR2 (via N-terminus). Interacts with TRIM8. Interacts with PRDM1. Sumoylated. As to expression, widely expressed, with highest levels in lung, kidney and spleen.

Its subcellular location is the cytoplasm. It localises to the nucleus. The protein localises to the nucleus speckle. It functions in the pathway protein modification; protein sumoylation. Functions as an E3-type small ubiquitin-like modifier (SUMO) ligase, stabilizing the interaction between UBE2I and the substrate, and as a SUMO-tethering factor. Plays a crucial role as a transcriptional coregulation in various cellular pathways, including the STAT pathway and the steroid hormone signaling pathway. The effects of this transcriptional coregulation, transactivation or silencing, may vary depending upon the biological context. Enhances the sumoylation of MTA1 and may participate in its paralog-selective sumoylation. Sumoylates CCAR2 which promotes its interaction with SIRT1. Diminishes the sumoylation of ZFHX3 by preventing the colocalization of ZFHX3 with SUMO1 in the nucleus. The sequence is that of E3 SUMO-protein ligase PIAS3 (Pias3) from Rattus norvegicus (Rat).